The primary structure comprises 264 residues: Thymidylate synthase (264 aa).

Residue Arg21 participates in dUMP binding. (6R)-5,10-methylene-5,6,7,8-tetrahydrofolate is bound at residue His51. 126 to 127 (RR) serves as a coordination point for dUMP. The Nucleophile role is filled by Cys146. DUMP contacts are provided by residues 166–169 (RSCD), Asn177, and 207–209 (HLY). Position 169 (Asp169) interacts with (6R)-5,10-methylene-5,6,7,8-tetrahydrofolate. Position 263 (Ala263) interacts with (6R)-5,10-methylene-5,6,7,8-tetrahydrofolate.

This sequence belongs to the thymidylate synthase family. Bacterial-type ThyA subfamily. Homodimer.

Its subcellular location is the cytoplasm. The enzyme catalyses dUMP + (6R)-5,10-methylene-5,6,7,8-tetrahydrofolate = 7,8-dihydrofolate + dTMP. It participates in pyrimidine metabolism; dTTP biosynthesis. Its function is as follows. Catalyzes the reductive methylation of 2'-deoxyuridine-5'-monophosphate (dUMP) to 2'-deoxythymidine-5'-monophosphate (dTMP) while utilizing 5,10-methylenetetrahydrofolate (mTHF) as the methyl donor and reductant in the reaction, yielding dihydrofolate (DHF) as a by-product. This enzymatic reaction provides an intracellular de novo source of dTMP, an essential precursor for DNA biosynthesis. This Escherichia coli (strain 55989 / EAEC) protein is Thymidylate synthase.